Here is a 326-residue protein sequence, read N- to C-terminus: DNA-directed RNA polymerase subunit alpha (326 aa).

The segment at 1–231 (MQTALLKPKI…DQLSVFAALE (231 aa)) is alpha N-terminal domain (alpha-NTD). Positions 247–326 (IDPILLRPVD…ENWPPAGLEK (80 aa)) are alpha C-terminal domain (alpha-CTD).

The protein belongs to the RNA polymerase alpha chain family. As to quaternary structure, homodimer. The RNAP catalytic core consists of 2 alpha, 1 beta, 1 beta' and 1 omega subunit. When a sigma factor is associated with the core the holoenzyme is formed, which can initiate transcription.

The catalysed reaction is RNA(n) + a ribonucleoside 5'-triphosphate = RNA(n+1) + diphosphate. DNA-dependent RNA polymerase catalyzes the transcription of DNA into RNA using the four ribonucleoside triphosphates as substrates. The sequence is that of DNA-directed RNA polymerase subunit alpha from Cupriavidus metallidurans (strain ATCC 43123 / DSM 2839 / NBRC 102507 / CH34) (Ralstonia metallidurans).